The chain runs to 74 residues: Protein SOM1, mitochondrial (74 aa).

In terms of assembly, component of the mitochondrial inner membrane peptidase (IMP) complex which at least consists of IMP1, IMP2 and SOM1.

The protein resides in the mitochondrion inner membrane. In terms of biological role, non-catalytic component of the mitochondrial inner membrane peptidase (IMP) complex. IMP catalyzes the removal of signal peptides required for the targeting of proteins from the mitochondrial matrix, across the inner membrane, into the inter-membrane space. SOM1 facilitates cleavage of a subset of IMP substrates. The protein is Protein SOM1, mitochondrial (SOM1) of Saccharomyces cerevisiae (strain ATCC 204508 / S288c) (Baker's yeast).